Here is a 1557-residue protein sequence, read N- to C-terminus: Probable kinase PglW (1557 aa).

Positions 12-130 constitute an NERD domain; it reads SEFEHERRGL…VAEAVCFTDN (119 aa). 2 consecutive Protein kinase domains span residues 195-490 and 530-816; these read ELER…LEVV and WEVR…KVFL. Residues 536-544 and lysine 564 contribute to the ATP site; that span reads LGTGSTSRA. Disordered stretches follow at residues 615 to 634 and 821 to 861; these read DERD…RRRE and TVPS…QRDR. Over residues 830–849 the composition is skewed to low complexity; it reads PAAPADGAAPAEGAAAGIAD.

Belongs to the protein kinase superfamily. Ser/Thr protein kinase family.

Functionally, BREX systems (bacteriophage exclusion) provide immunity against bacteriophage. Part of a type 2 BREX system. Previously called the phage growth limitation (Pgl) system, it confers protection against bacteriophage phiC31. The bacteria allows one cycle of phage infection, but subsequent cycles are impaired, protecting the original bacterial colony. The system undergoes high rates (10(-3) to 10(-4)) of phase reversion, i.e. loss and regain of phiC31 resistance. When the pglW-pglX-pglY-pglZ genes are transformed into a susceptible S.lividans (strain 1326) they confer resistance to infection by phage phiC31 and phiBT1; all 4 genes are necessary. The proteins has kinase domains and might bind DNA. Autophosphorylates when synthesized in vitro, cannot be expressed in E.coli. The sequence is that of Probable kinase PglW from Streptomyces coelicolor (strain ATCC BAA-471 / A3(2) / M145).